A 360-amino-acid chain; its full sequence is Aminomethyltransferase (360 aa).

It belongs to the GcvT family. The glycine cleavage system is composed of four proteins: P, T, L and H.

It catalyses the reaction N(6)-[(R)-S(8)-aminomethyldihydrolipoyl]-L-lysyl-[protein] + (6S)-5,6,7,8-tetrahydrofolate = N(6)-[(R)-dihydrolipoyl]-L-lysyl-[protein] + (6R)-5,10-methylene-5,6,7,8-tetrahydrofolate + NH4(+). In terms of biological role, the glycine cleavage system catalyzes the degradation of glycine. The polypeptide is Aminomethyltransferase (Pseudomonas syringae pv. tomato (strain ATCC BAA-871 / DC3000)).